The primary structure comprises 334 residues: MNRWLRLGFACVGSIFLMFALAACKQEETLTKVKVAEVTHSIFYAPLYVAESKGFFKEEGLDVDVNTTWGGDKTMTSLLSNGSDIALVGSETSIYVEAQGAKDPVINFAQLTQTDGTFLVAREDVEHFDWDQLKGKTFLGQRKGGMPQMVGEYVLNKHKIDPHKDIDLIQNIDFANIANAFASGTGEYVQLFEPQASLFEKKGIGHIVASFGEESGEVPYTTFMAKQSYLKKNEDTAVKFTKAIYKAQQWVENHSAKDITDAIKDEFDDTDPDVIETSIERYKKQHSYSPDPLLNEKEWELLQTIMDKSGELPKHIPYNQLVNKEIAEKVTSEK.

A signal peptide spans 1-23 (MNRWLRLGFACVGSIFLMFALAA). Cys-24 carries N-palmitoyl cysteine lipidation. The S-diacylglycerol cysteine moiety is linked to residue Cys-24.

The protein belongs to the bacterial solute-binding protein SsuA/TauA family.

The protein localises to the cell membrane. This chain is Putative binding protein YtlA (ytlA), found in Bacillus subtilis (strain 168).